The sequence spans 228 residues: Dolichyl-phosphate hexose transferase HVO_1613 (228 aa).

This sequence belongs to the glycosyltransferase 2 family.

In terms of biological role, glycosyltransferase that adds a monosaccharide to dolichol phosphate, thereby being responsible for generating one of the three monosaccharide-modified dolichol phosphates. The subunit onto which additional sugars are added is not known. The protein is Dolichyl-phosphate hexose transferase HVO_1613 of Haloferax volcanii (strain ATCC 29605 / DSM 3757 / JCM 8879 / NBRC 14742 / NCIMB 2012 / VKM B-1768 / DS2) (Halobacterium volcanii).